The sequence spans 194 residues: Molybdenum cofactor guanylyltransferase (194 aa).

Residues L12–G14, K25, N53, D70, and D100 contribute to the GTP site. D100 contacts Mg(2+).

This sequence belongs to the MobA family. Monomer. Requires Mg(2+) as cofactor.

It localises to the cytoplasm. The catalysed reaction is Mo-molybdopterin + GTP + H(+) = Mo-molybdopterin guanine dinucleotide + diphosphate. Its function is as follows. Transfers a GMP moiety from GTP to Mo-molybdopterin (Mo-MPT) cofactor (Moco or molybdenum cofactor) to form Mo-molybdopterin guanine dinucleotide (Mo-MGD) cofactor. This Aliivibrio fischeri (strain ATCC 700601 / ES114) (Vibrio fischeri) protein is Molybdenum cofactor guanylyltransferase.